We begin with the raw amino-acid sequence, 140 residues long: Fatty acid-binding protein 12 (140 aa).

A fatty acid contacts are provided by residues Arg-107 and 127 to 129 (RTY).

This sequence belongs to the calycin superfamily. Fatty-acid binding protein (FABP) family. Expressed in a number of retinoblastoma cell lines.

Its function is as follows. May play a role in lipid transport. This Homo sapiens (Human) protein is Fatty acid-binding protein 12 (FABP12).